Reading from the N-terminus, the 161-residue chain is Nucleotide-binding protein PFLU_4927 (161 aa).

The protein belongs to the YajQ family.

In terms of biological role, nucleotide-binding protein. The chain is Nucleotide-binding protein PFLU_4927 from Pseudomonas fluorescens (strain SBW25).